The following is an 86-amino-acid chain: Exodeoxyribonuclease 7 small subunit (86 aa).

It belongs to the XseB family. In terms of assembly, heterooligomer composed of large and small subunits.

The protein resides in the cytoplasm. It carries out the reaction Exonucleolytic cleavage in either 5'- to 3'- or 3'- to 5'-direction to yield nucleoside 5'-phosphates.. In terms of biological role, bidirectionally degrades single-stranded DNA into large acid-insoluble oligonucleotides, which are then degraded further into small acid-soluble oligonucleotides. This Xanthomonas oryzae pv. oryzae (strain MAFF 311018) protein is Exodeoxyribonuclease 7 small subunit.